Reading from the N-terminus, the 415-residue chain is UDP-N-acetylmuramoylalanine--D-glutamate ligase (415 aa).

91–97 (GTDGKST) contacts ATP.

The protein belongs to the MurCDEF family.

The protein resides in the cytoplasm. The enzyme catalyses UDP-N-acetyl-alpha-D-muramoyl-L-alanine + D-glutamate + ATP = UDP-N-acetyl-alpha-D-muramoyl-L-alanyl-D-glutamate + ADP + phosphate + H(+). Its pathway is cell wall biogenesis; peptidoglycan biosynthesis. Functionally, cell wall formation. Catalyzes the addition of glutamate to the nucleotide precursor UDP-N-acetylmuramoyl-L-alanine (UMA). The polypeptide is UDP-N-acetylmuramoylalanine--D-glutamate ligase (Aquifex aeolicus (strain VF5)).